The following is a 474-amino-acid chain: Trehalose-6-phosphate synthase (474 aa).

Arg-10 contributes to the D-glucose 6-phosphate binding site. A UDP-alpha-D-glucose-binding site is contributed by 22–23 (GG). Residues Tyr-77 and Asp-131 each coordinate D-glucose 6-phosphate. Positions 263 and 268 each coordinate UDP-alpha-D-glucose. D-glucose 6-phosphate is bound at residue Arg-301. UDP-alpha-D-glucose is bound by residues Phe-340 and 366–370 (LVAKE).

This sequence belongs to the glycosyltransferase 20 family. Homotetramer.

The catalysed reaction is D-glucose 6-phosphate + UDP-alpha-D-glucose = alpha,alpha-trehalose 6-phosphate + UDP + H(+). It participates in glycan biosynthesis; trehalose biosynthesis. Functionally, probably involved in the osmoprotection via the biosynthesis of trehalose. Catalyzes the transfer of glucose from UDP-alpha-D-glucose (UDP-Glc) to D-glucose 6-phosphate (Glc-6-P) to form trehalose-6-phosphate. Acts with retention of the anomeric configuration of the UDP-sugar donor. In Escherichia coli O157:H7, this protein is Trehalose-6-phosphate synthase.